The following is an 865-amino-acid chain: MPHVDLNPLKQRMQAARAAAVAQFRQHPRPDMLLTELRRIVDQALRELVKLCPLPAGATLAAVGGYGRGELYPHSDVDLLILLPQPPSAADARAVEALVAALWDLGLEPGHSVRTLEDCEREARGDITVETALLESRWLAGSRTLMKRLDSAMQARLDAAVFFQAKRVEMQQRHARYQDTPYALEPNCKESPGGLRDLQVILWMARAAGFGHSWREVAQAGLLTSSEARDLRRAEQAFKRLRIELHLLTGRREDRVLFDLQPGLAAVYGIASTATRRASELLMQRYYWAARLVTQLNVILVQNIEERLFPRPDSDARLIDDDFRNLRERLDIVREDGFERNPTLLLRAFLVMQQHPELIGMSARTLRAIWHSRHRIDAQFRRNPVNRKLFLQILQQPRGIVHELRRMTMLNILPRYLPVFRRIVGQMQHDLFHVYTVDQHTLAVVRNLRRFTMPEHAQEYPLASQLIAGLDRHWLLYVAALFHDIAKGRGGDHSELGAREVRRFAQDHGLDPADAELVEFLVRHHLLMSAVAQKRDLSDPQVVRDFAAQVGDERRLAALYLLTVADIRGTSPRVWNAWKGKLLEDLFRLALAALGGAHADAHTVLTERKDEAARLTRLAGLRDDAREAFWNQLDIAYFLRHDASEIAWHTRHLYYQVAPDEPVVRVRPTEHGEGLQVMVYTRDAPDLFVTTCGYFDAKSLSVQDARVHTTRHGWALDSFIVLAPEGFADLRAQATLVEHELAERLRDPHAARHAHAPRRLPHSHARRSRVFPVMPQAELSPDERSQSWRLSVTATDRPGLLYALARVFAEHGVDLIMAKIMTLGERVEDVFIVSGSALERPRSQMQFERAILDALAGDEPRQQAA.

Positions 1–318 (MPHVDLNPLK…FPRPDSDARL (318 aa)) are uridylyltransferase. The segment at 319–675 (IDDDFRNLRE…VRPTEHGEGL (357 aa)) is uridylyl-removing. In terms of domain architecture, HD spans 437-559 (VDQHTLAVVR…VGDERRLAAL (123 aa)). 2 ACT domains span residues 676–762 (QVMV…RLPH) and 789–865 (RLSV…QQAA). A disordered region spans residues 747–767 (DPHAARHAHAPRRLPHSHARR). Over residues 751 to 767 (ARHAHAPRRLPHSHARR) the composition is skewed to basic residues.

This sequence belongs to the GlnD family. It depends on Mg(2+) as a cofactor.

The enzyme catalyses [protein-PII]-L-tyrosine + UTP = [protein-PII]-uridylyl-L-tyrosine + diphosphate. The catalysed reaction is [protein-PII]-uridylyl-L-tyrosine + H2O = [protein-PII]-L-tyrosine + UMP + H(+). With respect to regulation, uridylyltransferase (UTase) activity is inhibited by glutamine, while glutamine activates uridylyl-removing (UR) activity. Its function is as follows. Modifies, by uridylylation and deuridylylation, the PII regulatory proteins (GlnB and homologs), in response to the nitrogen status of the cell that GlnD senses through the glutamine level. Under low glutamine levels, catalyzes the conversion of the PII proteins and UTP to PII-UMP and PPi, while under higher glutamine levels, GlnD hydrolyzes PII-UMP to PII and UMP (deuridylylation). Thus, controls uridylylation state and activity of the PII proteins, and plays an important role in the regulation of nitrogen assimilation and metabolism. The chain is Bifunctional uridylyltransferase/uridylyl-removing enzyme from Bordetella parapertussis (strain 12822 / ATCC BAA-587 / NCTC 13253).